The following is a 400-amino-acid chain: Elongation factor Tu (400 aa).

The 200-residue stretch at 10–209 (KPHINIGTIG…AVDDYIPTPE (200 aa)) folds into the tr-type G domain. The interval 19 to 26 (GHVDHGKT) is G1. Position 19–26 (19–26 (GHVDHGKT)) interacts with GTP. Mg(2+) is bound at residue Thr26. The interval 60-64 (GITIS) is G2. Residues 81 to 84 (DCPG) form a G3 region. GTP is bound by residues 81 to 85 (DCPGH) and 136 to 139 (NKVD). Positions 136–139 (NKVD) are G4. Residues 174–176 (SAK) form a G5 region.

This sequence belongs to the TRAFAC class translation factor GTPase superfamily. Classic translation factor GTPase family. EF-Tu/EF-1A subfamily. Monomer.

The protein resides in the cytoplasm. It catalyses the reaction GTP + H2O = GDP + phosphate + H(+). GTP hydrolase that promotes the GTP-dependent binding of aminoacyl-tRNA to the A-site of ribosomes during protein biosynthesis. The polypeptide is Elongation factor Tu (Herpetosiphon aurantiacus (Herpetosiphon giganteus)).